The following is a 63-amino-acid chain: Protein DsrB (63 aa).

Belongs to the DsrB family.

The chain is Protein DsrB from Yersinia pseudotuberculosis serotype O:3 (strain YPIII).